The following is a 145-amino-acid chain: D-aminoacyl-tRNA deacylase (145 aa).

The Gly-cisPro motif, important for rejection of L-amino acids motif lies at 137 to 138 (GP).

It belongs to the DTD family. In terms of assembly, homodimer.

It is found in the cytoplasm. It carries out the reaction glycyl-tRNA(Ala) + H2O = tRNA(Ala) + glycine + H(+). The catalysed reaction is a D-aminoacyl-tRNA + H2O = a tRNA + a D-alpha-amino acid + H(+). An aminoacyl-tRNA editing enzyme that deacylates mischarged D-aminoacyl-tRNAs. Also deacylates mischarged glycyl-tRNA(Ala), protecting cells against glycine mischarging by AlaRS. Acts via tRNA-based rather than protein-based catalysis; rejects L-amino acids rather than detecting D-amino acids in the active site. By recycling D-aminoacyl-tRNA to D-amino acids and free tRNA molecules, this enzyme counteracts the toxicity associated with the formation of D-aminoacyl-tRNA entities in vivo and helps enforce protein L-homochirality. The chain is D-aminoacyl-tRNA deacylase from Ruegeria pomeroyi (strain ATCC 700808 / DSM 15171 / DSS-3) (Silicibacter pomeroyi).